The sequence spans 180 residues: ATP synthase subunit b (180 aa).

A helical transmembrane segment spans residues 26–46 (IPLMLATLAALVISIFFLTYF).

Belongs to the ATPase B chain family. F-type ATPases have 2 components, F(1) - the catalytic core - and F(0) - the membrane proton channel. F(1) has five subunits: alpha(3), beta(3), gamma(1), delta(1), epsilon(1). F(0) has three main subunits: a(1), b(2) and c(10-14). The alpha and beta chains form an alternating ring which encloses part of the gamma chain. F(1) is attached to F(0) by a central stalk formed by the gamma and epsilon chains, while a peripheral stalk is formed by the delta and b chains.

It localises to the cell membrane. Its function is as follows. F(1)F(0) ATP synthase produces ATP from ADP in the presence of a proton or sodium gradient. F-type ATPases consist of two structural domains, F(1) containing the extramembraneous catalytic core and F(0) containing the membrane proton channel, linked together by a central stalk and a peripheral stalk. During catalysis, ATP synthesis in the catalytic domain of F(1) is coupled via a rotary mechanism of the central stalk subunits to proton translocation. Functionally, component of the F(0) channel, it forms part of the peripheral stalk, linking F(1) to F(0). This chain is ATP synthase subunit b, found in Mycoplasmopsis pulmonis (strain UAB CTIP) (Mycoplasma pulmonis).